A 239-amino-acid chain; its full sequence is MKFDPPLETVTLLRRYKRFMADVVRADGSEITVHCPNTGSMKNCVLGGPQQALISDSGNPKRKYRHTLEALQVAHGHWAGVNTARPNALVEEAVRAGQFPMLDSTSGVEREVKYGDSRFDLALGERADPHTFIEVKNVTLGPGPDDKDDGVIAFPDSVTERGQKHLQTLMDVVASGKRAVLFFCVQHSGATAARPADEIDARYGQLLREAIENGVEVLAWKSEVSAQCFRLKEPLPLDL.

It belongs to the SfsA family.

This is Sugar fermentation stimulation protein homolog from Alcanivorax borkumensis (strain ATCC 700651 / DSM 11573 / NCIMB 13689 / SK2).